A 546-amino-acid polypeptide reads, in one-letter code: Glucose-6-phosphate isomerase (546 aa).

Glutamate 358 serves as the catalytic Proton donor. Residues histidine 389 and lysine 504 contribute to the active site.

This sequence belongs to the GPI family.

Its subcellular location is the cytoplasm. It catalyses the reaction alpha-D-glucose 6-phosphate = beta-D-fructose 6-phosphate. It participates in carbohydrate biosynthesis; gluconeogenesis. It functions in the pathway carbohydrate degradation; glycolysis; D-glyceraldehyde 3-phosphate and glycerone phosphate from D-glucose: step 2/4. Catalyzes the reversible isomerization of glucose-6-phosphate to fructose-6-phosphate. The protein is Glucose-6-phosphate isomerase of Desulfosudis oleivorans (strain DSM 6200 / JCM 39069 / Hxd3) (Desulfococcus oleovorans).